We begin with the raw amino-acid sequence, 633 residues long: tRNA uridine 5-carboxymethylaminomethyl modification enzyme MnmG (633 aa).

FAD-binding positions include 15–20 (GAGHAG), Ile-127, and Ser-182. NAD(+) is bound at residue 276 to 290 (GPRYCPSIEDKIVRF). Gln-373 is an FAD binding site.

It belongs to the MnmG family. In terms of assembly, homodimer. Heterotetramer of two MnmE and two MnmG subunits. FAD serves as cofactor.

The protein localises to the cytoplasm. In terms of biological role, NAD-binding protein involved in the addition of a carboxymethylaminomethyl (cmnm) group at the wobble position (U34) of certain tRNAs, forming tRNA-cmnm(5)s(2)U34. The chain is tRNA uridine 5-carboxymethylaminomethyl modification enzyme MnmG from Streptococcus agalactiae serotype III (strain NEM316).